Reading from the N-terminus, the 478-residue chain is Pyrrolysine--tRNA ligase (478 aa).

A disordered region spans residues 106 to 188 (VMPKSVARTP…TSAMPASTSA (83 aa)). A compositionally biased stretch (polar residues) spans 122 to 132 (APVQTLPSESQ). Residues 133–188 (PAPTTPISASTTAPASTSTTAPAPASTTAPAPASTTAPASASTTISTSAMPASTSA) are compositionally biased toward low complexity.

It belongs to the class-II aminoacyl-tRNA synthetase family.

It localises to the cytoplasm. It carries out the reaction tRNA(Pyl) + L-pyrrolysine + ATP = L-pyrrolysyl-tRNA(Pyl) + AMP + diphosphate. In terms of biological role, catalyzes the attachment of pyrrolysine to tRNA(Pyl). Pyrrolysine is a lysine derivative encoded by the termination codon UAG. This is Pyrrolysine--tRNA ligase from Methanosarcina thermophila.